We begin with the raw amino-acid sequence, 290 residues long: Bifunctional protein FolD 1 (290 aa).

Residues 172-174 (GAS) and I238 each bind NADP(+).

The protein belongs to the tetrahydrofolate dehydrogenase/cyclohydrolase family. In terms of assembly, homodimer.

It catalyses the reaction (6R)-5,10-methylene-5,6,7,8-tetrahydrofolate + NADP(+) = (6R)-5,10-methenyltetrahydrofolate + NADPH. It carries out the reaction (6R)-5,10-methenyltetrahydrofolate + H2O = (6R)-10-formyltetrahydrofolate + H(+). It participates in one-carbon metabolism; tetrahydrofolate interconversion. Its function is as follows. Catalyzes the oxidation of 5,10-methylenetetrahydrofolate to 5,10-methenyltetrahydrofolate and then the hydrolysis of 5,10-methenyltetrahydrofolate to 10-formyltetrahydrofolate. The polypeptide is Bifunctional protein FolD 1 (Pseudomonas putida (strain GB-1)).